A 382-amino-acid polypeptide reads, in one-letter code: Ubiquitin-like protease 4 (382 aa).

The tract at residues 46–106 is disordered; the sequence is GTHLDGSIGE…DNDEWTNQKR (61 aa). The span at 84 to 100 shows a compositional bias: acidic residues; that stretch reads DLVDEDEEEEDEEDNDE.

The protein belongs to the peptidase C48 family. As to expression, expressed in hermaphrodite-specific neurons, head muscles, body wall muscles and pharyngeal cells.

The protein localises to the cytoplasm. The protein resides in the cytoskeleton. Its subcellular location is the microtubule organizing center. It is found in the centrosome. It localises to the nucleus. The protein localises to the mitochondrion matrix. Its pathway is protein modification; protein sumoylation. In terms of biological role, protease required for deconjugation of smo-1 conjugates from target proteins which is necessary for cell cycle progression. Required for respiration and the maintenance of normal mitochondrial homeostasis. In response to mitochondrial stress, required for the removal of smo-1 conjugates from the transcription factor dve-1, which promotes the translocation of dve-1 from the cytosol to the nucleus to initiate the mitochondrial unfolded protein response. Furthermore, removes the smo-1 conjugates from the transcription factor atfs-1 to promote its stability and activate the mitochondrial unfolded protein response. Also plays a role in promoting mitochondrial unfolded protein response-mediated innate immunity following infection with P.aeruginosa. The chain is Ubiquitin-like protease 4 from Caenorhabditis elegans.